The primary structure comprises 360 residues: MTVTLERRESTSLWERFCSWITSTENRLYIGWFGVLMIPCLLTATTVFIIAFIAAPPVDIDGIREPVSGSLLYGNNIITGAVVPTSNAIGLHLYPIWEAASLDEWLYNGGPYQLVVLHFLLGVAAYMGREWELSYRLGMRPWICVAFSAPVAAATAVFLIYPIGQGSFSDGMPLGISGTFNFMLVFQAEHNILMHPFHMAGVAGVFGGALFSAMHGSLVTSSLIRETTENESPNYGYKLGQEEETYNIVAAHGYFGRLIFQYASFNNSRALHFFLGLWPVVGIWLTSIGISTMAFNLNGLNFNQSIVDSQGRVINTWADIINRANLGIEVMHERNAHNFPLDLADNSLLPVASSSPSINS.

Helical transmembrane passes span 29 to 46 (YIGWFGVLMIPCLLTATT), 118 to 133 (HFLLGVAAYMGREWEL), and 142 to 156 (WICVAFSAPVAAATA). His118 contributes to the chlorophyll a binding site. Tyr126 contacts pheophytin a. [CaMn4O5] cluster is bound by residues Asp170 and Glu189. A helical transmembrane segment spans residues 197 to 218 (FHMAGVAGVFGGALFSAMHGSL). Chlorophyll a is bound at residue His198. Residues His215 and 264-265 (SF) contribute to the a quinone site. Position 215 (His215) interacts with Fe cation. His272 contributes to the Fe cation binding site. A helical membrane pass occupies residues 274–288 (FLGLWPVVGIWLTSI). Residues His332, Glu333, Asp342, and Ala344 each contribute to the [CaMn4O5] cluster site. Residues 345–360 (DNSLLPVASSSPSINS) constitute a propeptide that is removed on maturation.

Belongs to the reaction center PufL/M/PsbA/D family. PSII is composed of 1 copy each of membrane proteins PsbA, PsbB, PsbC, PsbD, PsbE, PsbF, PsbH, PsbI, PsbJ, PsbK, PsbL, PsbM, PsbT, PsbY, PsbZ, Psb30/Ycf12, at least 3 peripheral proteins of the oxygen-evolving complex and a large number of cofactors. It forms dimeric complexes. It depends on The D1/D2 heterodimer binds P680, chlorophylls that are the primary electron donor of PSII, and subsequent electron acceptors. It shares a non-heme iron and each subunit binds pheophytin, quinone, additional chlorophylls, carotenoids and lipids. D1 provides most of the ligands for the Mn4-Ca-O5 cluster of the oxygen-evolving complex (OEC). There is also a Cl(-1) ion associated with D1 and D2, which is required for oxygen evolution. The PSII complex binds additional chlorophylls, carotenoids and specific lipids. as a cofactor. In terms of processing, tyr-161 forms a radical intermediate that is referred to as redox-active TyrZ, YZ or Y-Z.

Its subcellular location is the plastid. It localises to the chloroplast thylakoid membrane. The catalysed reaction is 2 a plastoquinone + 4 hnu + 2 H2O = 2 a plastoquinol + O2. Functionally, photosystem II (PSII) is a light-driven water:plastoquinone oxidoreductase that uses light energy to abstract electrons from H(2)O, generating O(2) and a proton gradient subsequently used for ATP formation. It consists of a core antenna complex that captures photons, and an electron transfer chain that converts photonic excitation into a charge separation. The D1/D2 (PsbA/PsbD) reaction center heterodimer binds P680, the primary electron donor of PSII as well as several subsequent electron acceptors. The sequence is that of Photosystem II protein D1 from Cyanidium caldarium (Red alga).